Reading from the N-terminus, the 292-residue chain is Surface presentation of antigens protein SpaN (292 aa).

An intrachain disulfide couples Cys-19 to Cys-292. Disordered stretches follow at residues 129 to 151 (KNFERSHTSSVNPDNLLESDNRN) and 267 to 292 (RFDSSQHNKGNKNNSTGYNEQSEEEC). Polar residues predominate over residues 273 to 286 (HNKGNKNNSTGYNE).

It belongs to the SpaN family.

Its subcellular location is the cell outer membrane. In terms of biological role, required for surface presentation of invasion plasmid antigens. Could play a role in preserving the translocation competence of the ipa antigens. Required for invasion and for secretion of IpaB and IpaD proteins. The protein is Surface presentation of antigens protein SpaN (spaN) of Shigella sonnei.